Reading from the N-terminus, the 735-residue chain is Protein-associating with the carboxyl-terminal domain of ezrin (735 aa).

Gly2 carries N-myristoyl glycine lipidation. Residues 2–245 form the Protein kinase domain; the sequence is GSENSALKSY…LSTLLSHDFF (244 aa). 4 HEAT repeats span residues 194–249, 285–323, 333–370, and 372–409; these read FGAL…RNDF, LIAS…NAPG, LFQS…HFTQ, and QLKK…LLGP. Ser439 carries the phosphoserine modification. 2 disordered regions span residues 505–545 and 604–648; these read LSDV…ASIH and VPLT…GLGL. The segment covering 528 to 538 has biased composition (acidic residues); it reads WPDWSEPEEPE. The segment at 547–735 is interaction with EZR; sequence WPREPCDVAE…EELAWEDNNW (189 aa). Ser701 is subject to Phosphoserine.

Belongs to the protein kinase superfamily. As to quaternary structure, interacts with EZR/VIL2 C-terminal domain. In terms of processing, may be myristoylated; myristoylation may target it to Golgi compartment.

The protein localises to the cytoplasm. It localises to the golgi apparatus. The protein resides in the cell projection. It is found in the lamellipodium. In terms of biological role, may play a role in regulating cell adhesion/migration complexes in migrating cells. The protein is Protein-associating with the carboxyl-terminal domain of ezrin (Scyl3) of Mus musculus (Mouse).